The chain runs to 801 residues: U-box domain-containing protein 34 (801 aa).

A disordered region spans residues 205 to 309; the sequence is RSPTLPDPRQ…PETSRKSKKV (105 aa). The segment covering 236 to 254 has biased composition (polar residues); that stretch reads LTCNKPKTPQSSKASSATT. A compositionally biased stretch (basic and acidic residues) spans 289–309; it reads VSEHRDSDRSPPETSRKSKKV. Positions 301–395 form a coiled coil; it reads ETSRKSKKVE…ETAKALLARE (95 aa). A Protein kinase domain is found at 442 to 705; that stretch reads FSPEKVIGEG…DLKSEVIPVL (264 aa). Residues 448–456 and Lys-469 contribute to the ATP site; that span reads IGEGGYGKV. The Proton acceptor role is filled by Asp-564. The U-box domain maps to 724–797; that stretch reads RAPSHYFCPI…RDWKSRVRFS (74 aa).

It belongs to the protein kinase superfamily. Ser/Thr protein kinase family.

The enzyme catalyses L-seryl-[protein] + ATP = O-phospho-L-seryl-[protein] + ADP + H(+). The catalysed reaction is L-threonyl-[protein] + ATP = O-phospho-L-threonyl-[protein] + ADP + H(+). It carries out the reaction S-ubiquitinyl-[E2 ubiquitin-conjugating enzyme]-L-cysteine + [acceptor protein]-L-lysine = [E2 ubiquitin-conjugating enzyme]-L-cysteine + N(6)-ubiquitinyl-[acceptor protein]-L-lysine.. It functions in the pathway protein modification; protein ubiquitination. In terms of biological role, functions as an E3 ubiquitin ligase. This chain is U-box domain-containing protein 34 (PUB34), found in Arabidopsis thaliana (Mouse-ear cress).